We begin with the raw amino-acid sequence, 299 residues long: tRNA dimethylallyltransferase (299 aa).

ATP is bound at residue 13–20; it reads GATASGKT. 15–20 is a substrate binding site; sequence TASGKT. The tract at residues 38–41 is interaction with substrate tRNA; the sequence is DSRQ.

The protein belongs to the IPP transferase family. Monomer. Mg(2+) serves as cofactor.

The catalysed reaction is adenosine(37) in tRNA + dimethylallyl diphosphate = N(6)-dimethylallyladenosine(37) in tRNA + diphosphate. Catalyzes the transfer of a dimethylallyl group onto the adenine at position 37 in tRNAs that read codons beginning with uridine, leading to the formation of N6-(dimethylallyl)adenosine (i(6)A). The sequence is that of tRNA dimethylallyltransferase from Prochlorococcus marinus (strain MIT 9312).